A 349-amino-acid chain; its full sequence is Biotin synthase (349 aa).

One can recognise a Radical SAM core domain in the interval 70–295; sequence PEVEVEGIIS…RTMLRFAGGR (226 aa). [4Fe-4S] cluster contacts are provided by Cys-85, Cys-89, and Cys-92. [2Fe-2S] cluster-binding residues include Cys-128, Cys-161, Cys-220, and Arg-290.

The protein belongs to the radical SAM superfamily. Biotin synthase family. In terms of assembly, homodimer. Requires [4Fe-4S] cluster as cofactor. [2Fe-2S] cluster is required as a cofactor.

It carries out the reaction (4R,5S)-dethiobiotin + (sulfur carrier)-SH + 2 reduced [2Fe-2S]-[ferredoxin] + 2 S-adenosyl-L-methionine = (sulfur carrier)-H + biotin + 2 5'-deoxyadenosine + 2 L-methionine + 2 oxidized [2Fe-2S]-[ferredoxin]. It functions in the pathway cofactor biosynthesis; biotin biosynthesis; biotin from 7,8-diaminononanoate: step 2/2. In terms of biological role, catalyzes the conversion of dethiobiotin (DTB) to biotin by the insertion of a sulfur atom into dethiobiotin via a radical-based mechanism. This is Biotin synthase from Mycobacterium bovis (strain ATCC BAA-935 / AF2122/97).